Reading from the N-terminus, the 175-residue chain is Major MR/P fimbria protein (175 aa).

An N-terminal signal peptide occupies residues 1 to 23 (MKLNKLALVLGLGLSVVAGSALA). Cysteine 42 and cysteine 81 are disulfide-bonded.

The protein belongs to the fimbrial protein family.

The protein localises to the fimbrium. Major structural component of mannose-resistant/proteus-like fimbriae of P.mirabilis. The polypeptide is Major MR/P fimbria protein (mrpA) (Proteus mirabilis (strain HI4320)).